A 139-amino-acid chain; its full sequence is Large-conductance mechanosensitive channel 1 (139 aa).

A run of 3 helical transmembrane segments spans residues 8–28 (FISK…AAFG), 30–50 (IVDS…FGGL), and 81–101 (GSFI…FLMV).

It belongs to the MscL family. Homopentamer.

Its subcellular location is the cell inner membrane. Functionally, channel that opens in response to stretch forces in the membrane lipid bilayer. May participate in the regulation of osmotic pressure changes within the cell. This is Large-conductance mechanosensitive channel 1 from Mesorhizobium japonicum (strain LMG 29417 / CECT 9101 / MAFF 303099) (Mesorhizobium loti (strain MAFF 303099)).